The primary structure comprises 456 residues: FAD-dependent monooxygenase sor5 (456 aa).

The helical transmembrane segment at 18 to 38 (PLEVAIVGGGLTGLALALGLL) threads the bilayer. N-linked (GlcNAc...) asparagine glycosylation occurs at Asn43. 2 residues coordinate FAD: Glu48 and Arg119. Arg200 is an active-site residue. Positions 331 and 344 each coordinate FAD.

It belongs to the paxM FAD-dependent monooxygenase family. FAD serves as cofactor.

Its subcellular location is the membrane. It functions in the pathway secondary metabolite biosynthesis. Functionally, FAD-dependent monooxygenase; part of the SOR gene cluster that mediates the biosynthesis of sorbicillinoids, a diverse group of yellow secondary metabolites that restrict growth of competing pathogenic fungi but not of bacteria. Sorbicillinoids biosynthesis requires the action of two PKSs. The SOR cluster is required for the production of trichodimerol and dihydrotrichotetronin, with sor2 being sufficient for production of trichodimerol, but not dihydrotrichotetronin in the light. Sor1 iteratively combines three acetyl units and the growing chain is modified by the ketoacyl reductase subunit, and optional by the enoyl reductase subunit in the second cycle. The polyketide is then handed over to the PKS sor2, which adds three more acetyl units, and two methyl groups. Sor2 releases an aldehyde, which undergoes spontaneous cyclization resulting in the formation of sorbicillin or 2',3'-dihydrosorbicillin. The monooxygenase sor5 oxidizes sorbicillin and 2',3'-dihydrosorbicillin to 2',3'-dihydrosorbicillinol and sorbicillinol, respectively. The oxidoreductase sor8 further converts sorbicillinol into oxosorbicillinol. Sorbicillinol is the building block for the other sorbicillinoids such as disorbicillinol, bisvertinolon, dihydrobisvertinolone, and dihydrotrichotetronine. The protein is FAD-dependent monooxygenase sor5 of Hypocrea jecorina (strain QM6a) (Trichoderma reesei).